The following is a 476-amino-acid chain: MRTTTRRLPPAPAAAAVLLAALTCLLLRPAAVAAAGGHAADRIVRLPGQPEVDFDMYSGYITVDEAAGRSLFYLLQEAPEEAQPAPLVLWLNGGPGCSSVAYGASEELGAFRVMPRGAGLVLNEYRWNKVANVLFLDSPAGVGFSYTNTSSDIYTSGDNRTAHDSYAFLAAWFERFPHYKYREFYVAGESYAGHYVPELSQLVHRSGNPVINLKGFMVGNGLIDDYHDYVGTFEFWWNHGIVSDDTYRRLKDACLHDSFIHPSPACDAATDVATAEQGNIDMYSLYTPVCNISSSSSSSSLSRRRTRGRYPWLTGSYDPCTERYSTAYYNRRDVQTALHANVTGAMNYTWTNCSDTINTHWHDAPRSMLPIYRELIAAGLRIWVFSGDTDAVVPLTATRYSIGALGLATTTSWYPWYDDLQEVGGWSQVYKGLTLVSVRGAGHEVPLHRPRQALILFQQFLQGKPMPGRTTNVTVA.

Residues 1 to 34 (MRTTTRRLPPAPAAAAVLLAALTCLLLRPAAVAA) form the signal peptide. 3 disulfide bridges follow: Cys97–Cys353, Cys254–Cys266, and Cys290–Cys320. Residues Asn148 and Asn159 are each glycosylated (N-linked (GlcNAc...) asparagine). The active site involves Ser190. Residue Asn291 is glycosylated (N-linked (GlcNAc...) asparagine). Positions 295-313 (SSSSSSLSRRRTRGRYPWL) are cleaved as a propeptide — linker peptide. A Blocked amino end (Thr) modification is found at Thr314. N-linked (GlcNAc...) asparagine glycans are attached at residues Asn341 and Asn347. Asn352 carries an N-linked (GlcNAc...) asparagine; partial glycan. Asn352 carries O-linked (GalNAc...) threonine; in variant 351-AT-352 glycosylation. Residues Asp390 and His443 contribute to the active site. Asn472 carries an N-linked (GlcNAc...) asparagine glycan.

The protein belongs to the peptidase S10 family. As to quaternary structure, carboxypeptidase II is a dimer, where each monomer is composed of two chains linked by a disulfide bond.

The protein resides in the secreted. It catalyses the reaction Preferential release of a C-terminal arginine or lysine residue.. In terms of biological role, may be involved in the degradation of small peptides (2-5 residues) or in the degradation of storage proteins in the embryo. The sequence is that of Serine carboxypeptidase 2 (CBP2) from Hordeum vulgare (Barley).